A 419-amino-acid polypeptide reads, in one-letter code: Histidine--tRNA ligase (419 aa).

This sequence belongs to the class-II aminoacyl-tRNA synthetase family. As to quaternary structure, homodimer.

It is found in the cytoplasm. It carries out the reaction tRNA(His) + L-histidine + ATP = L-histidyl-tRNA(His) + AMP + diphosphate + H(+). In Desulfatibacillum aliphaticivorans, this protein is Histidine--tRNA ligase.